Here is a 527-residue protein sequence, read N- to C-terminus: V(D)J recombination-activating protein 2 (527 aa).

Positions 359-380 are disordered; sequence QKIVSNSQTSTEDPGDSTPFED. Polar residues predominate over residues 361-370; it reads IVSNSQTSTE. The segment covering 371 to 380 has biased composition (acidic residues); the sequence is DPGDSTPFED. The segment at 416-484 adopts a PHD-type; atypical zinc-finger fold; sequence WITCCPTCDV…KYYCNEHVQI (69 aa). Zn(2+) contacts are provided by Cys419, Cys423, Cys446, His452, His455, Cys458, Cys478, and His481. The tract at residues 490 to 511 is disordered; that stretch reads TPKRNPPLQKPPMKSLHKKGSG.

Belongs to the RAG2 family. In terms of assembly, component of the RAG complex composed of core components RAG1 and RAG2, and associated component HMGB1 or HMGB2. Maturing lymphoid cells.

The protein resides in the nucleus. Core component of the RAG complex, a multiprotein complex that mediates the DNA cleavage phase during V(D)J recombination. V(D)J recombination assembles a diverse repertoire of immunoglobulin and T-cell receptor genes in developing B and T-lymphocytes through rearrangement of different V (variable), in some cases D (diversity), and J (joining) gene segments. DNA cleavage by the RAG complex occurs in 2 steps: a first nick is introduced in the top strand immediately upstream of the heptamer, generating a 3'-hydroxyl group that can attack the phosphodiester bond on the opposite strand in a direct transesterification reaction, thereby creating 4 DNA ends: 2 hairpin coding ends and 2 blunt, 5'-phosphorylated ends. The chromatin structure plays an essential role in the V(D)J recombination reactions and the presence of histone H3 trimethylated at 'Lys-4' (H3K4me3) stimulates both the nicking and haipinning steps. The RAG complex also plays a role in pre-B cell allelic exclusion, a process leading to expression of a single immunoglobulin heavy chain allele to enforce clonality and monospecific recognition by the B-cell antigen receptor (BCR) expressed on individual B-lymphocytes. The introduction of DNA breaks by the RAG complex on one immunoglobulin allele induces ATM-dependent repositioning of the other allele to pericentromeric heterochromatin, preventing accessibility to the RAG complex and recombination of the second allele. In the RAG complex, RAG2 is not the catalytic component but is required for all known catalytic activities mediated by RAG1. It probably acts as a sensor of chromatin state that recruits the RAG complex to H3K4me3. The sequence is that of V(D)J recombination-activating protein 2 (Rag2) from Mus musculus (Mouse).